Here is a 307-residue protein sequence, read N- to C-terminus: Dihydroorotate dehydrogenase B (NAD(+)), catalytic subunit (307 aa).

FMN contacts are provided by residues serine 21 and 45–46 (KA). Substrate contacts are provided by residues lysine 45 and 69 to 73 (NAIGL). Asparagine 101 and asparagine 129 together coordinate FMN. Asparagine 129 contacts substrate. The active-site Nucleophile is the cysteine 132. FMN contacts are provided by lysine 167 and isoleucine 193. Residue 194-195 (NT) participates in substrate binding. Residues glycine 219, 245 to 246 (GG), and 267 to 268 (GT) contribute to the FMN site.

The protein belongs to the dihydroorotate dehydrogenase family. Type 1 subfamily. Heterotetramer of 2 PyrK and 2 PyrD type B subunits. The cofactor is FMN.

The protein localises to the cytoplasm. It catalyses the reaction (S)-dihydroorotate + NAD(+) = orotate + NADH + H(+). It participates in pyrimidine metabolism; UMP biosynthesis via de novo pathway; orotate from (S)-dihydroorotate (NAD(+) route): step 1/1. Catalyzes the conversion of dihydroorotate to orotate with NAD(+) as electron acceptor. This Cutibacterium acnes (strain DSM 16379 / KPA171202) (Propionibacterium acnes) protein is Dihydroorotate dehydrogenase B (NAD(+)), catalytic subunit (pyrD).